The sequence spans 60 residues: MDHRLLEIVACPVCNGKLYFNKENLELVCKADNLAYPVRDGIPVLLENEARPLSIDEKHA.

Belongs to the UPF0434 family.

This Yersinia enterocolitica serotype O:8 / biotype 1B (strain NCTC 13174 / 8081) protein is UPF0434 protein YE1549.